The following is a 653-amino-acid chain: ATP-dependent zinc metalloprotease FtsH 1 (653 aa).

Over 1–8 the chain is Cytoplasmic; that stretch reads MAENKWLR. The helical transmembrane segment at 9-29 threads the bilayer; the sequence is NGFVWIVLIIAVVALWVTFMK. At 30–110 the chain is on the extracellular side; it reads DGGSAREENF…RVNPASQWGN (81 aa). The helical transmembrane segment at 111 to 131 threads the bilayer; sequence WLSALTFILPTLFLIGIVIFM. At 132 to 653 the chain is on the cytoplasmic side; sequence MRQAQGTNNQ…SPTMRPQPAS (522 aa). Residue 203-210 coordinates ATP; it reads GPPGTGKT. His-425 lines the Zn(2+) pocket. Glu-426 is a catalytic residue. Residues His-429 and Asp-501 each contribute to the Zn(2+) site. The tract at residues 604-653 is disordered; sequence EPRPRPQLVGPPVTRPAALAHKTEEADRGGERSPHPQPHPSPTMRPQPAS. Positions 624–637 are enriched in basic and acidic residues; sequence HKTEEADRGGERSP. A compositionally biased stretch (pro residues) spans 638-653; it reads HPQPHPSPTMRPQPAS.

The protein in the central section; belongs to the AAA ATPase family. In the C-terminal section; belongs to the peptidase M41 family. As to quaternary structure, homohexamer. Zn(2+) is required as a cofactor.

The protein resides in the cell membrane. Acts as a processive, ATP-dependent zinc metallopeptidase for both cytoplasmic and membrane proteins. Plays a role in the quality control of integral membrane proteins. The chain is ATP-dependent zinc metalloprotease FtsH 1 from Sphaerobacter thermophilus (strain ATCC 49802 / DSM 20745 / KCCM 41009 / NCIMB 13125 / S 6022).